The following is a 188-amino-acid chain: MLVSNVYAQTSEALRERVENALEHADRVFPPFDFSHFCSHFFWLVISFGFFYFFIARVIVPRIGCTIEIRRDRIASDLDRAMRLKQEADTVVEIYERKLAEARLQAYAIAQKTSNEIKEKTKLERKEIETSLDKKLADAEGQIAKIRNKAVQNIGSIAEEVVPEIVKKLIGVEVSKESVSLAVKAADN.

A helical transmembrane segment spans residues 41-61 (FFWLVISFGFFYFFIARVIVP).

The protein belongs to the ATPase B chain family. As to quaternary structure, F-type ATPases have 2 components, F(1) - the catalytic core - and F(0) - the membrane proton channel. F(1) has five subunits: alpha(3), beta(3), gamma(1), delta(1), epsilon(1). F(0) has three main subunits: a(1), b(2) and c(10-14). The alpha and beta chains form an alternating ring which encloses part of the gamma chain. F(1) is attached to F(0) by a central stalk formed by the gamma and epsilon chains, while a peripheral stalk is formed by the delta and b chains.

It localises to the cell inner membrane. Its function is as follows. F(1)F(0) ATP synthase produces ATP from ADP in the presence of a proton or sodium gradient. F-type ATPases consist of two structural domains, F(1) containing the extramembraneous catalytic core and F(0) containing the membrane proton channel, linked together by a central stalk and a peripheral stalk. During catalysis, ATP synthesis in the catalytic domain of F(1) is coupled via a rotary mechanism of the central stalk subunits to proton translocation. Functionally, component of the F(0) channel, it forms part of the peripheral stalk, linking F(1) to F(0). The b'-subunit is a diverged and duplicated form of b found in plants and photosynthetic bacteria. This is ATP synthase subunit b 2 (atpF2) from Bartonella bacilliformis (strain ATCC 35685 / KC583 / Herrer 020/F12,63).